Reading from the N-terminus, the 523-residue chain is MSAADFAFLIAESDLFDWSLTVALVIGGALGFLVVWAFTRHTRRMAHEQAAELEEVARREAAVAAEEIRQKAEAEIQEKRAELNRDFDRREIESEVRLREIRAHEESLALLDYQLEQRQERLNRETAAMRQARDAIRALSKSVRQRLEGVSQMDAESIRQALREEVQLECQDELRALRREIMEKSEQDLQTEGRRIMIAAMQRLASKPNNDLTSTIVSLPNEDMKGRIIGREGRNIKAFEAATGVTVLIDESPQTVLISSFDPIRREVARGALEALIKDGRIHPATIEEFVKRAHEEIELSAMQAGEDAVTRLNINGLHPEIIKLLGKLKFRFSYNQNVLDHSVETASLASMIASEVGLDPNVAKRAGLLHDIGKAVNADYEGSHAHIGAEFIRRYGETPIVVNSVAAHHEEVKPETVYAGLVILADTISATRPGARAESMAGYIQRLGRLEKLAMAIDGVQQAFAIQAGREIRVVVSPQTVTDDRAREIAKELRKRIEAELQYPSTIKITVIREQRFTETAT.

A helical membrane pass occupies residues 18 to 38; sequence WSLTVALVIGGALGFLVVWAF. Positions 213–276 constitute a KH domain; that stretch reads TSTIVSLPNE…EVARGALEAL (64 aa). An HD domain is found at 339-432; it reads VLDHSVETAS…VILADTISAT (94 aa).

This sequence belongs to the RNase Y family.

The protein resides in the cell membrane. Its function is as follows. Endoribonuclease that initiates mRNA decay. The protein is Ribonuclease Y of Opitutus terrae (strain DSM 11246 / JCM 15787 / PB90-1).